The following is a 141-amino-acid chain: Mitochondrial import inner membrane translocase subunit tim16 (141 aa).

Residues 59–117 (EACKILNVNKPADGTAANMEEVMERFKRLFDANDPEKGGSFYLQSKVVRARERLEAEIK) form a J-like region. The segment at 119-141 (KMEEKQAEEEVKEGWNPKIYKDR) is disordered.

Belongs to the TIM16/PAM16 family. Heterodimer with tim14/pam18. Component of the PAM complex, at least composed of hsp70-5/ssc1, grpe/mge1, tim44, un-4/pam16, pam17 and tim14/pam18.

The protein localises to the mitochondrion inner membrane. In terms of biological role, essential component of the PAM complex, a complex required for the translocation of transit peptide-containing proteins from the inner membrane into the mitochondrial matrix in an ATP-dependent manner. In the complex, it is required to regulate activity of mtHSP70 (hsp70-5) via its interaction with tim14/pam18. May act by positioning tim14/pam18 in juxtaposition to mtHSP70 at the translocon to maximize ATPase stimulation. The chain is Mitochondrial import inner membrane translocase subunit tim16 (un-4) from Neurospora crassa (strain ATCC 24698 / 74-OR23-1A / CBS 708.71 / DSM 1257 / FGSC 987).